The sequence spans 312 residues: Telomere-binding protein OPG077 (312 aa).

The protein belongs to the orthopoxvirus OPG077 family.

Its subcellular location is the virion. Functionally, DNA-binding protein which binds to the hairpin form of the viral telomeric sequence. Required for the production of mature virions (MV). This chain is Telomere-binding protein OPG077 (OPG077), found in Vaccinia virus (strain L-IVP) (VACV).